Reading from the N-terminus, the 605-residue chain is Leucine-rich repeat-containing protein 40 (605 aa).

The segment at 1–21 (MSRFKRGGKAPDPLSGFRAPK) is disordered. LRR repeat units follow at residues 83-104 (DLTK…ISLL), 106-127 (ALVV…IREL), 129-151 (NLQK…QHLQ), 152-173 (NLKS…IGHL), 175-196 (ILEE…VGQL), 198-219 (GLVK…IGKM), 221-242 (NLRQ…VAGM), 244-265 (SLEQ…PFLT), 266-287 (KLKE…HLQN), 290-311 (SLSV…ISLL), 313-335 (GLER…GSLP), 336-357 (NLKS…ILNK), 429-450 (PITT…IVEM), 453-475 (SVYD…CMLL), 476-497 (KLTH…MEAL), 499-520 (RLQS…LYTI), 522-543 (NLET…QLKK), 546-567 (KLST…LGNC), and 569-590 (SLRA…ILAK).

This chain is Leucine-rich repeat-containing protein 40 (lrrc40), found in Xenopus laevis (African clawed frog).